The following is a 421-amino-acid chain: Zinc finger protein Pegasus (421 aa).

The interval 35-55 (GDKEAETLQGAGTEGDQNGLD) is disordered. 3 C2H2-type zinc fingers span residues 82-104 (LKCRYCNYASKGTARLIEHIRIH), 110-132 (HRCHLCPFASAYERHLEAHMRSH), and 138-161 (YKCELCSFRCSDRSNLSHHRRRKH). Over residues 229–238 (SMTKSSQTSG) the composition is skewed to polar residues. 2 disordered regions span residues 229-249 (SMTKSSQTSGLPRDPQDLMVD) and 292-358 (QPAT…PTLP). The segment covering 292 to 313 (QPATPAVVSSVSASIAQSSSPT) has biased composition (low complexity). Residues 339-351 (HTSTPSISNSQPS) are compositionally biased toward polar residues. 2 consecutive C2H2-type zinc fingers follow at residues 366-388 (HHCQHCDMYFADNILYTIHMGCH) and 394-418 (FQCNICGCKCKNKYDFACHFARGQH).

This sequence belongs to the Ikaros C2H2-type zinc-finger protein family. Probably self-associates.

The protein resides in the nucleus. Its function is as follows. Transcriptional repressor that binds the core 5'GNNTGTNG-3' DNA consensus sequence. The sequence is that of Zinc finger protein Pegasus (IKZF5) from Gallus gallus (Chicken).